A 213-amino-acid chain; its full sequence is GTP cyclohydrolase 1 (213 aa).

Residues C104, H107, and C175 each coordinate Zn(2+).

This sequence belongs to the GTP cyclohydrolase I family. As to quaternary structure, homomer.

It catalyses the reaction GTP + H2O = 7,8-dihydroneopterin 3'-triphosphate + formate + H(+). The protein operates within cofactor biosynthesis; 7,8-dihydroneopterin triphosphate biosynthesis; 7,8-dihydroneopterin triphosphate from GTP: step 1/1. The chain is GTP cyclohydrolase 1 from Brucella canis (strain ATCC 23365 / NCTC 10854 / RM-666).